A 65-amino-acid chain; its full sequence is UPF0434 protein RPB_0294 (65 aa).

The protein belongs to the UPF0434 family.

This Rhodopseudomonas palustris (strain HaA2) protein is UPF0434 protein RPB_0294.